A 273-amino-acid chain; its full sequence is Cell division protein FtsQ (273 aa).

The Cytoplasmic portion of the chain corresponds to 1–10 (MWNDARTINL). Residues 11-31 (IANTLAVLAVAAMLLAGVAWV) traverse the membrane as a helical segment. Residues 32-273 (AQRPYFTLAA…HSKSKPAKKR (242 aa)) lie on the Periplasmic side of the membrane. The region spanning 37 to 110 (FTLAAIEIES…NTLRVRVEEQ (74 aa)) is the POTRA domain.

The protein belongs to the FtsQ/DivIB family. FtsQ subfamily. In terms of assembly, part of a complex composed of FtsB, FtsL and FtsQ.

It localises to the cell inner membrane. Functionally, essential cell division protein. May link together the upstream cell division proteins, which are predominantly cytoplasmic, with the downstream cell division proteins, which are predominantly periplasmic. May control correct divisome assembly. This is Cell division protein FtsQ from Bordetella pertussis (strain Tohama I / ATCC BAA-589 / NCTC 13251).